The following is a 341-amino-acid chain: HTH-type transcriptional repressor PurR (341 aa).

The HTH lacI-type domain occupies Ala-2–Val-56. Positions Ile-4 to Asn-23 form a DNA-binding region, H-T-H motif. The DNA-binding element occupies Ser-48–Val-56. 5 residues coordinate hypoxanthine: Tyr-73, Arg-190, Thr-192, Phe-221, and Asp-275.

As to quaternary structure, homodimer.

It functions in the pathway purine metabolism; purine nucleotide biosynthesis [regulation]. Is the main repressor of the genes involved in the de novo synthesis of purine nucleotides, regulating purB, purC, purEK, purF, purHD, purL, purMN and guaBA expression. PurR is allosterically activated to bind its cognate DNA by binding the purine corepressors, hypoxanthine or guanine, thereby effecting transcription repression. This is HTH-type transcriptional repressor PurR from Salmonella typhimurium (strain LT2 / SGSC1412 / ATCC 700720).